A 461-amino-acid chain; its full sequence is Mycosin-3 (461 aa).

The first 25 residues, 1–25 (MIRAAFACLAATVVVAGWWTPPAWA), serve as a signal peptide directing secretion. The 334-residue stretch at 64 to 397 (DPGVPTPSQT…AGNLDAVAAL (334 aa)) folds into the Peptidase S8 domain. Active-site charge relay system residues include aspartate 95, histidine 126, and serine 342. Residues 432–452 (AFAGAAALSVLVGLTAATVAI) traverse the membrane as a helical segment.

The protein belongs to the peptidase S8 family.

It localises to the cell membrane. This is Mycosin-3 from Mycobacterium tuberculosis (strain ATCC 25618 / H37Rv).